The primary structure comprises 211 residues: Ribosomal RNA small subunit methyltransferase G (211 aa).

Glycine 73, phenylalanine 78, and arginine 141 together coordinate S-adenosyl-L-methionine.

The protein belongs to the methyltransferase superfamily. RNA methyltransferase RsmG family.

The protein localises to the cytoplasm. It carries out the reaction guanosine(527) in 16S rRNA + S-adenosyl-L-methionine = N(7)-methylguanosine(527) in 16S rRNA + S-adenosyl-L-homocysteine. Its function is as follows. Specifically methylates the N7 position of guanine in position 527 of 16S rRNA. This is Ribosomal RNA small subunit methyltransferase G from Jannaschia sp. (strain CCS1).